Here is a 32-residue protein sequence, read N- to C-terminus: ilv operon leader peptide (32 aa).

In Escherichia coli O157:H7, this protein is ilv operon leader peptide (ilvL).